Here is a 252-residue protein sequence, read N- to C-terminus: MDTVKIDTRDVNFWYGDFHALKGISMQIEEKSVVAFIGPSGCGKSTFLRLFNRMNDLIPATRLEGEIRIDGHNIYAKGVEVDELRKNVGMVFQRPNPFPKSIFENVAYGLRVNGVKDNAFIRQRVEETLKGAALWDEVKDKLKESAYALSGGQQQRLCIARAMAVSPSVLLMDEPASALDPISTAKVEELIHELKKDYTIVIVTHNMQQAARVSDKTAFFYLGEMVEYDDTKKIFTNPEKEATQNYITGRFG.

Residues 6–247 enclose the ABC transporter domain; that stretch reads IDTRDVNFWY…PEKEATQNYI (242 aa). Residue 38 to 45 participates in ATP binding; that stretch reads GPSGCGKS.

It belongs to the ABC transporter superfamily. Phosphate importer (TC 3.A.1.7) family. The complex is composed of two ATP-binding proteins (PstB), two transmembrane proteins (PstC and PstA) and a solute-binding protein (PstS).

It is found in the cell inner membrane. It catalyses the reaction phosphate(out) + ATP + H2O = ADP + 2 phosphate(in) + H(+). Functionally, part of the ABC transporter complex PstSACB involved in phosphate import. Responsible for energy coupling to the transport system. The sequence is that of Phosphate import ATP-binding protein PstB from Bacteroides thetaiotaomicron (strain ATCC 29148 / DSM 2079 / JCM 5827 / CCUG 10774 / NCTC 10582 / VPI-5482 / E50).